Reading from the N-terminus, the 324-residue chain is Endochitinase B (324 aa).

An N-terminal signal peptide occupies residues 1–23 (MRLREFTALSSLLFSLLLLSASA). The Chitin-binding type-1 domain occupies 24–65 (EQCGSQAGGARCASGLCCSKFGWCGNTNDYCGPGNCQSQCPG). Cystine bridges form between Cys26–Cys41, Cys35–Cys47, Cys40–Cys54, and Cys59–Cys63. A 4-hydroxyproline mark is found at Pro67 and Pro69. 3 disulfides stabilise this stretch: Cys96–Cys158, Cys170–Cys178, and Cys277–Cys309. The Proton donor role is filled by Glu140. Positions 318–324 (GLLVDTM) are cleaved as a propeptide — removed in mature form.

The protein belongs to the glycosyl hydrolase 19 family. Chitinase class I subfamily. In terms of processing, the 4-hydroxyproline residues are not glycosylated in this plant vacuolar protein.

Its subcellular location is the vacuole. The catalysed reaction is Random endo-hydrolysis of N-acetyl-beta-D-glucosaminide (1-&gt;4)-beta-linkages in chitin and chitodextrins.. Defense against chitin-containing fungal pathogens. This chain is Endochitinase B (CHN50), found in Nicotiana tabacum (Common tobacco).